The primary structure comprises 48 residues: Large ribosomal subunit protein eL40 (48 aa).

It belongs to the eukaryotic ribosomal protein eL40 family.

The chain is Large ribosomal subunit protein eL40 from Methanospirillum hungatei JF-1 (strain ATCC 27890 / DSM 864 / NBRC 100397 / JF-1).